We begin with the raw amino-acid sequence, 467 residues long: Transcription factor fos-1 (467 aa).

Residues 1 to 22 (MFEQPSSTTNTTTSSGSGSDSN) are compositionally biased toward low complexity. 2 disordered regions span residues 1–38 (MFEQ…QAHP) and 139–179 (QYST…AAAR). Residues 163-226 (DDKRLKRRQR…NSLKNYLETH (64 aa)) form the bZIP domain. The segment at 165–205 (KRLKRRQRNKEAAARCRQRRIDLMKELQDQVNDFKNSNDKK) is basic motif. The interval 212–219 (IRNKLNSL) is leucine-zipper. Disordered stretches follow at residues 266 to 291 (RADS…PVED) and 395 to 467 (QPIT…LRPL). Residues 273–286 (SIRSGHSSSSSEQH) show a composition bias toward low complexity. Residues 434-454 (SSNTGLTPSGQPTMNFVSTPT) show a composition bias toward polar residues. Phosphothreonine occurs at positions 440, 452, and 454.

The protein belongs to the bZIP family. Fos subfamily. In terms of assembly, homodimer. Heterodimer; with jun-1. Interacts with kgb-1 and hda-1. In terms of processing, may be phosphorylated by kgb-1. Phosphorylation at Thr-440 increases sensitivity to heavy metal stress. Phosphorylation inhibits homodimer formation, and promotes association with target promoters. As to expression, expressed in anchor cells. Isoform a is expressed in somatic gonad cells that neighbor anchor cells. Isoform b is expressed in vulval cells, the uterine cells that neighbor anchor cells and the spermatheca.

The protein resides in the nucleus. Its function is as follows. Developmentally regulated transcription factor which binds and recognizes the enhancer DNA sequence 5'-TGA[CG]TCA-3'. In terms of biological role, plays a role the development of the reproductive system, controlling events including anchor cell (AC) fusion and invasion. Regulates downstream transcriptional targets, including zmp-1, cdh-3, him-4 and mig10b, to promote the removal of the gonadal basement membrane during AC invasion. Regulates aff-1 expression to promote AC fusion. With jun-1 regulates egl-1 and lin-12 expression to allow uterine cell specification and development. Functionally, required for ovulation. Controls plc-1 expression in the spermatheca to regulate spermathecal valve dilation. Acts with hda-1 as a downstream repressor of the kgb-1 mediated stress response pathway that transcriptionally represses genes involved in the response to heavy metals, such as kreg-1. This is Transcription factor fos-1 from Caenorhabditis elegans.